The chain runs to 160 residues: Cytochrome b6-f complex subunit 4 (160 aa).

3 helical membrane passes run 36–56 (LLYI…GLAV), 95–115 (LLGI…PFIE), and 128–148 (IAMS…IGAC).

This sequence belongs to the cytochrome b family. PetD subfamily. In terms of assembly, the 4 large subunits of the cytochrome b6-f complex are cytochrome b6, subunit IV (17 kDa polypeptide, PetD), cytochrome f and the Rieske protein, while the 4 small subunits are PetG, PetL, PetM and PetN. The complex functions as a dimer.

Its subcellular location is the cellular thylakoid membrane. Component of the cytochrome b6-f complex, which mediates electron transfer between photosystem II (PSII) and photosystem I (PSI), cyclic electron flow around PSI, and state transitions. The protein is Cytochrome b6-f complex subunit 4 of Prochlorococcus marinus (strain MIT 9312).